A 559-amino-acid polypeptide reads, in one-letter code: (-)-drimenol synthase (559 aa).

5 residues coordinate Mg(2+): D311, D315, D456, S460, and E464. The DDXXD motif motif lies at 311–315; sequence DDIYD.

It belongs to the terpene synthase family. It depends on Mg(2+) as a cofactor.

The catalysed reaction is (2E,6E)-farnesyl diphosphate + H2O = (5S,9S,10S)-drim-7-en-11-ol + diphosphate. It participates in secondary metabolite biosynthesis; terpenoid biosynthesis. Its function is as follows. Catalyzes the conversion of (2E,6E)-farnesyl diphosphate (FPP) into drimenol, a precursor of the sesquiterpenoid polygodial. Polygodial has been shown to be an antifeedant for a number of herbivorous insects. This is (-)-drimenol synthase from Persicaria hydropiper (Marshpepper knotweed).